Reading from the N-terminus, the 2515-residue chain is Protein tudor (2515 aa).

Phosphoserine occurs at positions 226, 235, and 239. Tudor domains are found at residues 455–513 and 641–696; these read APEL…LLEI and QLIL…HLEM. Residue Ser800 is modified to Phosphoserine. Positions 840-996 are disordered; it reads QAVKSVSGSK…SSSESVAAAK (157 aa). Positions 890-900 are enriched in low complexity; that stretch reads STGSYSSGMSS. Residues 906–917 are compositionally biased toward polar residues; that stretch reads RQQNGRTPIQSP. The span at 918 to 927 shows a compositional bias: basic and acidic residues; sequence RHNEKQEAKK. Composition is skewed to polar residues over residues 943-954 and 964-976; these read GQQGNQRSQNAP and QKST…SSKR. Low complexity predominate over residues 977–995; the sequence is SSGVGSDIASSSSESVAAA. Tudor domains are found at residues 1062 to 1122 and 1355 to 1414; these read QLKV…FADP and KFDV…FYEH. The disordered stretch occupies residues 1515–1589; that stretch reads EEDKGRKETV…KPATPVPEVV (75 aa). The segment covering 1540–1553 has biased composition (basic and acidic residues); that stretch reads NDKDREPKKSKPAE. Residues 1569–1584 are compositionally biased toward pro residues; that stretch reads SPVPAEPAPVPKPATP. 5 Tudor domains span residues 1662–1718, 1839–1898, 2023–2082, 2211–2269, and 2392–2451; these read NVVN…SHIE, GFEK…SLPS, KAAV…LIKP, TTNS…PIPS, and DLKE…KPAR.

As to quaternary structure, may form part of a piRNA processing complex consisting of tud, aub and AGO3. Interacts with AGO3 (when symmetrically dimethylated on Arg residues) and aub (when symmetrically dimethylated on Arg residues). Interacts with vls. Interacts with me31B/DDX6 (when symmetrically dimethylated on Arg residues).

The protein localises to the cytoplasm. The protein resides in the perinuclear region. It is found in the cytoplasmic ribonucleoprotein granule. In terms of biological role, may act via the Piwi-interacting RNA (piRNA) metabolic process mediated by aub and AGO3 Piwi proteins, which mediates the repression of transposable elements during meiosis by forming complexes composed of piRNAs and Piwi proteins and governs the methylation and subsequent repression of transposons. Required during oogenesis for the formation of primordial germ cells and for normal abdominal segmentation. Not involved in repression of retroelements. The sequence is that of Protein tudor from Drosophila melanogaster (Fruit fly).